We begin with the raw amino-acid sequence, 239 residues long: Protein G1-like8 (239 aa).

Disordered regions lie at residues 1–35 (MEGGGGGADAQAQAQPVAQAPPAMQPMQQLSRYES) and 149–239 (KARG…ATRV). Over residues 9 to 29 (DAQAQAQPVAQAPPAMQPMQQ) the composition is skewed to low complexity. The ALOG domain occupies 32-159 (RYESQKRRDW…ARGIPYEKKK (128 aa)). Residues 157 to 161 (KKKRK) carry the Nuclear localization signal motif. A compositionally biased stretch (pro residues) spans 167 to 178 (QPPPQPPLPPQH). 2 stretches are compositionally biased toward low complexity: residues 179–215 (QPGAAAGEASSSSSAAAAAVAAEGSGSSAATAAATSQ) and 223–239 (TTTTTASAAAPTTATRV).

Belongs to the plant homeotic and developmental regulators ALOG protein family.

It is found in the nucleus. Probable transcription regulator that acts as a developmental regulator by promoting cell growth in response to light. This is Protein G1-like8 from Oryza sativa subsp. indica (Rice).